The following is a 392-amino-acid chain: Succinyl-diaminopimelate desuccinylase (392 aa).

H75 contacts Zn(2+). D77 is a catalytic residue. Residue D108 participates in Zn(2+) binding. E147 acts as the Proton acceptor in catalysis. The Zn(2+) site is built by E148, E176, and H365.

This sequence belongs to the peptidase M20A family. DapE subfamily. As to quaternary structure, homodimer. Zn(2+) is required as a cofactor. Requires Co(2+) as cofactor.

It carries out the reaction N-succinyl-(2S,6S)-2,6-diaminopimelate + H2O = (2S,6S)-2,6-diaminopimelate + succinate. It functions in the pathway amino-acid biosynthesis; L-lysine biosynthesis via DAP pathway; LL-2,6-diaminopimelate from (S)-tetrahydrodipicolinate (succinylase route): step 3/3. In terms of biological role, catalyzes the hydrolysis of N-succinyl-L,L-diaminopimelic acid (SDAP), forming succinate and LL-2,6-diaminopimelate (DAP), an intermediate involved in the bacterial biosynthesis of lysine and meso-diaminopimelic acid, an essential component of bacterial cell walls. The protein is Succinyl-diaminopimelate desuccinylase of Rhodopseudomonas palustris (strain BisB18).